Consider the following 516-residue polypeptide: Probable rhamnogalacturonase B (516 aa).

The signal sequence occupies residues 1–21 (MRLHAFTLLSLLGLVPSFAAA). C42 and C68 are oxidised to a cystine. N145 is a glycosylation site (N-linked (GlcNAc...) asparagine). Catalysis depends on D219, which acts as the Proton donor. The cysteines at positions 221 and 238 are disulfide-linked. N239 carries an N-linked (GlcNAc...) asparagine glycan. H294 is an active-site residue. The N-linked (GlcNAc...) asparagine glycan is linked to N321. 2 disulfides stabilise this stretch: C344–C350 and C372–C381. A disordered region spans residues 462-516 (ETPAAASRSEQVVQGASQETSQPAPESAGPVRSVPTGGNRPSRHRHGHHHFWIAA). Residues 469–485 (RSEQVVQGASQETSQPA) show a composition bias toward polar residues. Positions 502-516 (PSRHRHGHHHFWIAA) are enriched in basic residues.

This sequence belongs to the glycosyl hydrolase 28 family.

It localises to the secreted. It carries out the reaction Endohydrolysis of alpha-D-GalA-(1-&gt;2)-alpha-L-Rha glycosidic bond in the rhamnogalacturonan I backbone with initial inversion of anomeric configuration releasing oligosaccharides with beta-D-GalA at the reducing end.. In terms of biological role, pectinolytic enzymes consist of four classes of enzymes: pectine lyase, polygalacturonase, pectin methylesterase and rhamnogalacturonase. Hydrolyzes alpha-D-galacturonopyranosyl-(1,2)-alpha-L-rhamnopyranosyl linkages in the backbone of the hairy regions of pectins. The polypeptide is Probable rhamnogalacturonase B (rhgB) (Neosartorya fischeri (strain ATCC 1020 / DSM 3700 / CBS 544.65 / FGSC A1164 / JCM 1740 / NRRL 181 / WB 181) (Aspergillus fischerianus)).